A 103-amino-acid polypeptide reads, in one-letter code: c-Myc-binding protein (103 aa).

The protein belongs to the AMY1 family. As to quaternary structure, binds via its C-terminal region to the N-terminal region of MYC. Associates with AKAP1/S-AKAP84. Interacts with MYCBPAP. Interacts with CFAP91. Highly expressed in heart, placenta, pancreas, skeletal muscle and kidney. Also present at low levels in lung.

It is found in the cytoplasm. It localises to the nucleus. Its subcellular location is the mitochondrion. Its function is as follows. May control the transcriptional activity of MYC. Stimulates the activation of E box-dependent transcription by MYC. The chain is c-Myc-binding protein from Homo sapiens (Human).